The chain runs to 319 residues: Glycine--tRNA ligase alpha subunit (319 aa).

Positions 290–319 are disordered; sequence RQQQPEAPAPGPAAVVGGRDRKDACDVKEG. Residues 307–319 are compositionally biased toward basic and acidic residues; the sequence is GRDRKDACDVKEG.

It belongs to the class-II aminoacyl-tRNA synthetase family. In terms of assembly, tetramer of two alpha and two beta subunits.

It localises to the cytoplasm. The enzyme catalyses tRNA(Gly) + glycine + ATP = glycyl-tRNA(Gly) + AMP + diphosphate. This is Glycine--tRNA ligase alpha subunit from Moorella thermoacetica (strain ATCC 39073 / JCM 9320).